Reading from the N-terminus, the 361-residue chain is Queuine tRNA-ribosyltransferase (361 aa).

The active-site Proton acceptor is Asp-92. Residues 92 to 96 (DSGGF), Asp-146, Gln-189, and Gly-216 each bind substrate. Positions 247–253 (GVGKPAD) are RNA binding. The active-site Nucleophile is the Asp-266. The tract at residues 271 to 275 (TRSGR) is RNA binding; important for wobble base 34 recognition. Positions 304, 306, 309, and 335 each coordinate Zn(2+).

Belongs to the queuine tRNA-ribosyltransferase family. In terms of assembly, homodimer. Within each dimer, one monomer is responsible for RNA recognition and catalysis, while the other monomer binds to the replacement base PreQ1. It depends on Zn(2+) as a cofactor.

The catalysed reaction is 7-aminomethyl-7-carbaguanine + guanosine(34) in tRNA = 7-aminomethyl-7-carbaguanosine(34) in tRNA + guanine. It functions in the pathway tRNA modification; tRNA-queuosine biosynthesis. Functionally, catalyzes the base-exchange of a guanine (G) residue with the queuine precursor 7-aminomethyl-7-deazaguanine (PreQ1) at position 34 (anticodon wobble position) in tRNAs with GU(N) anticodons (tRNA-Asp, -Asn, -His and -Tyr). Catalysis occurs through a double-displacement mechanism. The nucleophile active site attacks the C1' of nucleotide 34 to detach the guanine base from the RNA, forming a covalent enzyme-RNA intermediate. The proton acceptor active site deprotonates the incoming PreQ1, allowing a nucleophilic attack on the C1' of the ribose to form the product. After dissociation, two additional enzymatic reactions on the tRNA convert PreQ1 to queuine (Q), resulting in the hypermodified nucleoside queuosine (7-(((4,5-cis-dihydroxy-2-cyclopenten-1-yl)amino)methyl)-7-deazaguanosine). The polypeptide is Queuine tRNA-ribosyltransferase (Rickettsia bellii (strain OSU 85-389)).